The chain runs to 467 residues: Asparagine--tRNA ligase (467 aa).

This sequence belongs to the class-II aminoacyl-tRNA synthetase family. In terms of assembly, homodimer.

It localises to the cytoplasm. It catalyses the reaction tRNA(Asn) + L-asparagine + ATP = L-asparaginyl-tRNA(Asn) + AMP + diphosphate + H(+). This chain is Asparagine--tRNA ligase, found in Haemophilus influenzae (strain PittGG).